Here is a 100-residue protein sequence, read N- to C-terminus: Large ribosomal subunit protein uL23 (100 aa).

It belongs to the universal ribosomal protein uL23 family. In terms of assembly, part of the 50S ribosomal subunit. Contacts protein L29, and trigger factor when it is bound to the ribosome.

One of the early assembly proteins it binds 23S rRNA. One of the proteins that surrounds the polypeptide exit tunnel on the outside of the ribosome. Forms the main docking site for trigger factor binding to the ribosome. The sequence is that of Large ribosomal subunit protein uL23 from Shewanella amazonensis (strain ATCC BAA-1098 / SB2B).